The sequence spans 234 residues: MATASESSSSKRWLPLESNPDVMNQYLWGLGLAPDEAECNDVYGLDDELLEMVPKPVLAVLFLYPITKKSEEERIEQDKEIKEKVHSDKVYFMKQTVGNACGTIGLLHAIGNITSEIKLSDGSFLDRFFKSTANMTPMERAKFLENDSQIEDAHSVAVIAGDTPASEDADTHFICLACVEGELYELDGRKAGPISHGASSPATLLKDATKVIKKMIEKNPGSLNFNLIAISKRT.

The 221-residue stretch at 12 to 232 folds into the UCH catalytic domain; that stretch reads RWLPLESNPD…LNFNLIAISK (221 aa). The active-site Nucleophile is the cysteine 101. Histidine 172 functions as the Proton donor in the catalytic mechanism.

It belongs to the peptidase C12 family.

The catalysed reaction is Thiol-dependent hydrolysis of ester, thioester, amide, peptide and isopeptide bonds formed by the C-terminal Gly of ubiquitin (a 76-residue protein attached to proteins as an intracellular targeting signal).. In Arabidopsis thaliana (Mouse-ear cress), this protein is Ubiquitin carboxyl-terminal hydrolase 3.